The sequence spans 123 residues: Large ribosomal subunit protein bL12 (123 aa).

It belongs to the bacterial ribosomal protein bL12 family. In terms of assembly, homodimer. Part of the ribosomal stalk of the 50S ribosomal subunit. Forms a multimeric L10(L12)X complex, where L10 forms an elongated spine to which 2 to 4 L12 dimers bind in a sequential fashion. Binds GTP-bound translation factors.

In terms of biological role, forms part of the ribosomal stalk which helps the ribosome interact with GTP-bound translation factors. Is thus essential for accurate translation. The sequence is that of Large ribosomal subunit protein bL12 from Neisseria meningitidis serogroup C (strain 053442).